Consider the following 346-residue polypeptide: N-acetyl-gamma-glutamyl-phosphate reductase (346 aa).

Cysteine 149 is an active-site residue.

It belongs to the NAGSA dehydrogenase family. Type 1 subfamily.

Its subcellular location is the cytoplasm. It carries out the reaction N-acetyl-L-glutamate 5-semialdehyde + phosphate + NADP(+) = N-acetyl-L-glutamyl 5-phosphate + NADPH + H(+). It functions in the pathway amino-acid biosynthesis; L-arginine biosynthesis; N(2)-acetyl-L-ornithine from L-glutamate: step 3/4. In terms of biological role, catalyzes the NADPH-dependent reduction of N-acetyl-5-glutamyl phosphate to yield N-acetyl-L-glutamate 5-semialdehyde. The chain is N-acetyl-gamma-glutamyl-phosphate reductase from Geotalea daltonii (strain DSM 22248 / JCM 15807 / FRC-32) (Geobacter daltonii).